We begin with the raw amino-acid sequence, 533 residues long: Flavin-dependent halogenase gsfI (533 aa).

3 residues coordinate FAD: Gly14, Gly17, and Glu47. 2 residues coordinate chloride: Ser331 and Gly332.

The protein belongs to the flavin-dependent halogenase family.

It catalyses the reaction griseophenone C + FADH2 + chloride + O2 = griseophenone B + FAD + 2 H2O + H(+). The protein operates within secondary metabolite biosynthesis; terpenoid biosynthesis. Flavin-dependent halogenase; part of the gene cluster that mediates the biosynthesis of griseofulvin, an important antifungal drug that has been in use for a long time for treating dermatophyte infections. The first step of the pathway is the formation of the heptaketide backbone by gsfA which is initiated by priming with acetyl-CoA, followed by sequential condensations of 6 malonyl-CoA units. The resulting benzophenone can undergo a spontaneous dehydration to form norlichexanthone. However, the true precursor for the griseofulvin biosynthesis is not norlichexanthone, but the heptaketide benzophenone that is O-methylated at 3-OH by gsfB to produce griseophenone D which is further methylated at 9-OH by gsfC to yield griseophenone C. Griseophenone C is then substrate of halogenase gsfI which is responsible for the regio-specific chlorination at the C13 position to form griseophenone B. The cytochrome P450 gsfF catalyzes the coupling of orcinol and phloroglucinol rings in griseophenone B to form desmethyl-dehydrogriseofulvin A which is further methylated at 5-OH by gsfD to yield dehydrogriseofulvin. Finally, gsfE performs stereospecific reduction of enone 18 of dehydrogriseofulvin to afford the final product griseofulvin. In Penicillium aethiopicum, this protein is Flavin-dependent halogenase gsfI.